The following is a 197-amino-acid chain: ATP-dependent Clp protease proteolytic subunit 2 (197 aa).

Catalysis depends on Ser-96, which acts as the Nucleophile. His-121 is a catalytic residue.

Belongs to the peptidase S14 family. Fourteen ClpP subunits assemble into 2 heptameric rings which stack back to back to give a disk-like structure with a central cavity, resembling the structure of eukaryotic proteasomes.

It localises to the cytoplasm. The enzyme catalyses Hydrolysis of proteins to small peptides in the presence of ATP and magnesium. alpha-casein is the usual test substrate. In the absence of ATP, only oligopeptides shorter than five residues are hydrolyzed (such as succinyl-Leu-Tyr-|-NHMec, and Leu-Tyr-Leu-|-Tyr-Trp, in which cleavage of the -Tyr-|-Leu- and -Tyr-|-Trp bonds also occurs).. Functionally, cleaves peptides in various proteins in a process that requires ATP hydrolysis. Has a chymotrypsin-like activity. Plays a major role in the degradation of misfolded proteins. The protein is ATP-dependent Clp protease proteolytic subunit 2 of Parasynechococcus marenigrum (strain WH8102).